The primary structure comprises 645 residues: Chaperone protein DnaK (645 aa).

Thr199 is subject to Phosphothreonine; by autocatalysis. Disordered stretches follow at residues 509-530 (GALS…AEED) and 615-645 (EAGA…EVKE). Over residues 518 to 530 (QMQKDAEANAEED) the composition is skewed to basic and acidic residues. Residues 615-626 (EAGADAAGAAGA) show a composition bias toward low complexity. Over residues 631–645 (GDDDDAIDAEFEVKE) the composition is skewed to acidic residues.

This sequence belongs to the heat shock protein 70 family.

Its function is as follows. Acts as a chaperone. The polypeptide is Chaperone protein DnaK (Rhodopirellula baltica (strain DSM 10527 / NCIMB 13988 / SH1)).